We begin with the raw amino-acid sequence, 206 residues long: Pyridoxine/pyridoxamine 5'-phosphate oxidase (206 aa).

Residues 53–58, 68–69, Lys75, and Gln97 contribute to the FMN site; these read RMVLLK and YT. Lys58 is a binding site for substrate. Substrate is bound by residues Tyr115, Arg119, and Ser123. FMN is bound by residues 132-133 and Trp177; that span reads QS. Position 183–185 (183–185) interacts with substrate; that stretch reads RLH. Position 187 (Arg187) interacts with FMN.

The protein belongs to the pyridoxamine 5'-phosphate oxidase family. As to quaternary structure, homodimer. FMN serves as cofactor.

The catalysed reaction is pyridoxamine 5'-phosphate + O2 + H2O = pyridoxal 5'-phosphate + H2O2 + NH4(+). The enzyme catalyses pyridoxine 5'-phosphate + O2 = pyridoxal 5'-phosphate + H2O2. It participates in cofactor metabolism; pyridoxal 5'-phosphate salvage; pyridoxal 5'-phosphate from pyridoxamine 5'-phosphate: step 1/1. It functions in the pathway cofactor metabolism; pyridoxal 5'-phosphate salvage; pyridoxal 5'-phosphate from pyridoxine 5'-phosphate: step 1/1. Its function is as follows. Catalyzes the oxidation of either pyridoxine 5'-phosphate (PNP) or pyridoxamine 5'-phosphate (PMP) into pyridoxal 5'-phosphate (PLP). This chain is Pyridoxine/pyridoxamine 5'-phosphate oxidase, found in Rhizobium etli (strain ATCC 51251 / DSM 11541 / JCM 21823 / NBRC 15573 / CFN 42).